Consider the following 171-residue polypeptide: Endoribonuclease YbeY (171 aa).

Residues H126, H130, and H136 each contribute to the Zn(2+) site.

Belongs to the endoribonuclease YbeY family. Zn(2+) is required as a cofactor.

It localises to the cytoplasm. In terms of biological role, single strand-specific metallo-endoribonuclease involved in late-stage 70S ribosome quality control and in maturation of the 3' terminus of the 16S rRNA. The protein is Endoribonuclease YbeY of Rhizobium leguminosarum bv. trifolii (strain WSM2304).